Consider the following 381-residue polypeptide: Subtilisin J (381 aa).

The N-terminal stretch at 1-29 (MRSKKLWISLLFALTLIFTMAFSNMSVQA) is a signal peptide. Positions 30-106 (AGKSSTEKKY…VEEDHIAHEY (77 aa)) are excised as a propeptide. Residues 38–103 (KYIVGFKQTM…VAYVEEDHIA (66 aa)) form the Inhibitor I9 domain. Residue Q108 coordinates Ca(2+). Positions 111-380 (PYGISQIKAP…KGLINVQAAA (270 aa)) constitute a Peptidase S8 domain. Catalysis depends on D138, which acts as the Charge relay system. D147 contacts Ca(2+). Catalysis depends on H170, which acts as the Charge relay system. Ca(2+) contacts are provided by L181, N183, I185, V187, A275, Y277, and T280. The active-site Charge relay system is S327.

Belongs to the peptidase S8 family. It depends on Ca(2+) as a cofactor.

The protein localises to the secreted. It carries out the reaction Hydrolysis of proteins with broad specificity for peptide bonds, and a preference for a large uncharged residue in P1. Hydrolyzes peptide amides.. Its function is as follows. Subtilisin is an extracellular alkaline serine protease, it catalyzes the hydrolysis of proteins and peptide amides. This chain is Subtilisin J (aprJ), found in Geobacillus stearothermophilus (Bacillus stearothermophilus).